A 103-amino-acid polypeptide reads, in one-letter code: MKVTTIIAALLSVAVVDAQNNAQCRKLGLPCHATKTIPYVVKKGDTLTHIAHDIYKRKVGICDLAYTNHIGYNPDLIYEDQTLLIPTDCKTIDDGSCLKKHVS.

The N-terminal stretch at 1–18 is a signal peptide; the sequence is MKVTTIIAALLSVAVVDA. 2 disulfides stabilise this stretch: C31-C89 and C62-C97. A LysM domain is found at 37–85; that stretch reads IPYVVKKGDTLTHIAHDIYKRKVGICDLAYTNHIGYNPDLIYEDQTLLI. G44, T48, D75, and I77 together coordinate chitin.

The protein belongs to the secreted LysM effector family. Forms homodimers in a chitin-independent manner through interactions at the N-termini of Mgx1LysM monomers. Homodimers are further polymerized in a chitin-dependent manner.

The protein localises to the secreted. It localises to the cell wall. In terms of biological role, secreted effector that enables the plant pathogenic fungus to manipulate host defenses for successful infection. Binds chitin and suppresses the chitin-induced reactive oxygen species (ROS) burst. Chitin-induced polymerization of homodimers forms a contiguous Mg1LysM highly oligomeric super-complexe that is anchored to the chitin in the fungal cell wall to prevent hydrolysis by host chitinases. In Zymoseptoria tritici (strain CBS 115943 / IPO323) (Speckled leaf blotch fungus), this protein is Secreted LysM effector Mgx1LysM.